The sequence spans 340 residues: DNA-directed RNA polymerase subunit alpha (340 aa).

The tract at residues 1-235 (MYRNWTELIK…DQLNPFINFD (235 aa)) is alpha N-terminal domain (alpha-NTD). Residues 251–340 (WNPNLFRKVD…LSKQFEEENF (90 aa)) are alpha C-terminal domain (alpha-CTD).

It belongs to the RNA polymerase alpha chain family. In terms of assembly, homodimer. The RNAP catalytic core consists of 2 alpha, 1 beta, 1 beta' and 1 omega subunit. When a sigma factor is associated with the core the holoenzyme is formed, which can initiate transcription.

It catalyses the reaction RNA(n) + a ribonucleoside 5'-triphosphate = RNA(n+1) + diphosphate. DNA-dependent RNA polymerase catalyzes the transcription of DNA into RNA using the four ribonucleoside triphosphates as substrates. In Magnetococcus marinus (strain ATCC BAA-1437 / JCM 17883 / MC-1), this protein is DNA-directed RNA polymerase subunit alpha.